The following is an 838-amino-acid chain: DNA gyrase subunit A (838 aa).

In terms of domain architecture, Topo IIA-type catalytic spans 41 to 510 (LPEVRDGLKP…ADGDVSDEDL (470 aa)). Tyr129 (O-(5'-phospho-DNA)-tyrosine intermediate) is an active-site residue. Residues 537–543 (QKRGGKG) carry the GyrA-box motif.

This sequence belongs to the type II topoisomerase GyrA/ParC subunit family. In terms of assembly, heterotetramer, composed of two GyrA and two GyrB chains. In the heterotetramer, GyrA contains the active site tyrosine that forms a transient covalent intermediate with DNA, while GyrB binds cofactors and catalyzes ATP hydrolysis.

It localises to the cytoplasm. The enzyme catalyses ATP-dependent breakage, passage and rejoining of double-stranded DNA.. A type II topoisomerase that negatively supercoils closed circular double-stranded (ds) DNA in an ATP-dependent manner to modulate DNA topology and maintain chromosomes in an underwound state. Negative supercoiling favors strand separation, and DNA replication, transcription, recombination and repair, all of which involve strand separation. Also able to catalyze the interconversion of other topological isomers of dsDNA rings, including catenanes and knotted rings. Type II topoisomerases break and join 2 DNA strands simultaneously in an ATP-dependent manner. In Mycobacterium tuberculosis (strain CDC 1551 / Oshkosh), this protein is DNA gyrase subunit A.